The primary structure comprises 293 residues: Lysosomal amino acid transporter 1 homolog (293 aa).

The Lumenal segment spans residues 1–37; that stretch reads MVWRTLGASNFSTCPNGSVQWIWDVFGECAQDGWDEA. N-linked (GlcNAc...) asparagine glycosylation is found at asparagine 10 and asparagine 16. The PQ-loop 1 domain occupies 34–100; sequence WDEASVGLGL…LADQLPLQTY (67 aa). Residues 38 to 58 traverse the membrane as a helical segment; the sequence is SVGLGLVSILCFAASTFPQYI. Topologically, residues 59 to 71 are cytoplasmic; it reads KACKTGNMDQALS. Residues 72–92 form a helical membrane-spanning segment; sequence LWFLLGWIGGDSCNLIGSFLA. Over 93–96 the chain is Lumenal; the sequence is DQLP. Residues 97–117 form a helical membrane-spanning segment; it reads LQTYTAVYYVLADLMMLTLYF. The Cytoplasmic portion of the chain corresponds to 118-127; it reads HYKFKKRPSP. Residues 128–148 form a helical membrane-spanning segment; sequence LSAPINSVLLFILGTVCITPL. Over 149 to 182 the chain is Lumenal; it reads LSSTDPVAVPREGFRGRTLLSVEPGNKPFTKKEV. The chain crosses the membrane as a helical span at residues 183 to 203; sequence IGFVIGSASSLLYLLSRLPQI. One can recognise a PQ-loop 2 domain in the interval 191–243; it reads SSLLYLLSRLPQIRTNFIRQSTQGISYSLFALVMLGNTLYGLSVLLKNPEVGQ. Over 204 to 214 the chain is Cytoplasmic; the sequence is RTNFIRQSTQG. Residues 215 to 235 traverse the membrane as a helical segment; sequence ISYSLFALVMLGNTLYGLSVL. Over 236 to 254 the chain is Lumenal; that stretch reads LKNPEVGQSEGSYLLHHLP. Residues 255 to 275 traverse the membrane as a helical segment; it reads WLVGSLGVLLLDTIISIQFLV. At 276 to 293 the chain is on the cytoplasmic side; that stretch reads YRSHETAAASEREPLLPS. Positions 290 to 291 match the Di-leucine motif motif; that stretch reads LL.

This sequence belongs to the laat-1 family. In terms of tissue distribution, ubiquitously expressed.

It localises to the lysosome membrane. Functionally, amino acid transporter that specifically mediates the pH-dependent export of the cationic amino acids arginine, histidine and lysine from lysosomes. The polypeptide is Lysosomal amino acid transporter 1 homolog (Mus musculus (Mouse)).